Consider the following 1062-residue polypeptide: Valine--tRNA ligase, mitochondrial (1062 aa).

The transit peptide at 1 to 15 directs the protein to the mitochondrion; sequence MPHLPLASFRPPLRG. Positions 1-73 are disordered; the sequence is MPHLPLASFR…AKGKPPAEST (73 aa). The span at 42-56 shows a compositional bias: basic and acidic residues; that stretch reads RNREAKQKRLREKQA. The 'HIGH' region signature appears at 146–156; that stretch reads PNVTGSLHIGH. The short motif at 659–663 is the 'KMSKS' region element; it reads KMSKS. Lysine 662 contacts ATP.

It belongs to the class-I aminoacyl-tRNA synthetase family.

It localises to the mitochondrion. It carries out the reaction tRNA(Val) + L-valine + ATP = L-valyl-tRNA(Val) + AMP + diphosphate. Its function is as follows. Catalyzes the attachment of valine to tRNA(Val) in a two-step reaction: valine is first activated by ATP to form Val-AMP and then transferred to the acceptor end of tRNA(Val). The chain is Valine--tRNA ligase, mitochondrial (VARS2) from Sus scrofa (Pig).